A 139-amino-acid chain; its full sequence is Plastocyanin (139 aa).

An N-terminal signal peptide occupies residues 1–34 (MKLISASLRRFSLAVLTILLVVSSFAVFTPSASA). In terms of domain architecture, Plastocyanin-like spans 35 to 139 (ETYQVKLGTD…GMVGTITVQG (105 aa)). His73, Cys123, His126, and Met131 together coordinate Cu cation.

The protein belongs to the plastocyanin family. Cu(2+) serves as cofactor.

The protein resides in the cellular thylakoid membrane. In terms of biological role, participates in electron transfer between P700 and the cytochrome b6-f complex in photosystem I. This chain is Plastocyanin, found in Nostoc punctiforme (strain ATCC 29133 / PCC 73102).